Reading from the N-terminus, the 565-residue chain is NAD-dependent malic enzyme (565 aa).

Residue Tyr104 is the Proton donor of the active site. Arg157 contacts NAD(+). Catalysis depends on Lys175, which acts as the Proton acceptor. A divalent metal cation contacts are provided by Glu246, Asp247, and Asp270. Asp270 and Asn418 together coordinate NAD(+).

This sequence belongs to the malic enzymes family. Homotetramer. It depends on Mg(2+) as a cofactor. The cofactor is Mn(2+).

The catalysed reaction is (S)-malate + NAD(+) = pyruvate + CO2 + NADH. It catalyses the reaction oxaloacetate + H(+) = pyruvate + CO2. The protein is NAD-dependent malic enzyme of Salmonella arizonae (strain ATCC BAA-731 / CDC346-86 / RSK2980).